The chain runs to 433 residues: GTPase Der (433 aa).

EngA-type G domains lie at Lys-5–Asn-167 and Ile-174–Glu-349. Residues Gly-11–Ser-18, Asp-58–Phe-62, Asn-119–Asp-122, Gly-180–Ser-187, Asp-227–Ile-231, and Ser-292–Asp-295 each bind GTP. One can recognise a KH-like domain in the interval Phe-350–Ile-429.

Belongs to the TRAFAC class TrmE-Era-EngA-EngB-Septin-like GTPase superfamily. EngA (Der) GTPase family. As to quaternary structure, associates with the 50S ribosomal subunit.

Its function is as follows. GTPase that plays an essential role in the late steps of ribosome biogenesis. This Borreliella afzelii (strain PKo) (Borrelia afzelii) protein is GTPase Der.